The chain runs to 100 residues: NADH-quinone oxidoreductase subunit K (100 aa).

Transmembrane regions (helical) follow at residues I4–V24, L29–F49, and F63–V83.

Belongs to the complex I subunit 4L family. In terms of assembly, NDH-1 is composed of 14 different subunits. Subunits NuoA, H, J, K, L, M, N constitute the membrane sector of the complex.

The protein localises to the cell inner membrane. It catalyses the reaction a quinone + NADH + 5 H(+)(in) = a quinol + NAD(+) + 4 H(+)(out). NDH-1 shuttles electrons from NADH, via FMN and iron-sulfur (Fe-S) centers, to quinones in the respiratory chain. The immediate electron acceptor for the enzyme in this species is believed to be ubiquinone. Couples the redox reaction to proton translocation (for every two electrons transferred, four hydrogen ions are translocated across the cytoplasmic membrane), and thus conserves the redox energy in a proton gradient. The protein is NADH-quinone oxidoreductase subunit K of Myxococcus xanthus (strain DK1622).